The sequence spans 130 residues: Protachykinin-1 (130 aa).

An N-terminal signal peptide occupies residues 1-19; sequence MKILVAVAVIFFISTQLSA. The propeptide occupies 20–56; the sequence is EEIGANDDFNYWSDWSDSDQIKEEMPEPFEHLLQRIA. A methionine amide mark is found at Met68 and Met107.

Belongs to the tachykinin family. In terms of processing, the substance P form is cleaved at Pro-59 by the prolyl endopeptidase FAP (seprase) activity (in vitro). Substance P is also cleaved and degraded by Angiotensin-converting enzyme (ACE) and neprilysin (MME).

It is found in the secreted. Its function is as follows. Tachykinins are active peptides which excite neurons, evoke behavioral responses, are potent vasodilators and secretagogues, and contract (directly or indirectly) many smooth muscles. This Bos taurus (Bovine) protein is Protachykinin-1 (TAC1).